The chain runs to 495 residues: Cytochrome P450 monooxygenase cnsC (495 aa).

C434 is a binding site for heme.

It belongs to the cytochrome P450 family. Heme is required as a cofactor.

Its pathway is alkaloid biosynthesis. Cytochrome P450 monooxygenase; part of the gene cluster that mediates the biosynthesis of communesins, a prominent class of indole alkaloids with great potential as pharmaceuticals. Communesins are biosynthesized by the coupling of tryptamine and aurantioclavine, two building blocks derived from L-tryptophan. The L-tryptophan decarboxylase cnsB converts L-tryptophan to tryptamine, whereas the tryptophan dimethylallyltransferase cnsF converts L-tryptophan to 4-dimethylallyl tryptophan which is further transformed to aurantioclavine by the aurantioclavine synthase cnsA, probably aided by the catalase cnsD. The cytochrome P450 monooxygenase cnsC catalyzes the heterodimeric coupling between the two different indole moieties, tryptamine and aurantioclavine, to construct vicinal quaternary stereocenters and yield the heptacyclic communesin scaffold. The O-methyltransferase cnsE then methylates the communesin scaffold to produce communesin K, the simplest characterized communesin that contains the heptacyclic core. The dioxygenase cnsJ converts communesin K into communesin I. Acylation to introduce the hexadienyl group at position N16 of communesin I by the acyltransferase cnsK leads to the production of communesin B. The hexadienyl group is produced by the highly reducing polyketide synthase cnsI, before being hydrolytically removed from cnsI by the serine hydrolase cnsH, converted into hexadienyl-CoA by the CoA ligase cnsG, and then transferred to communesin I by cnsK. Surprisingly, cnsK may also be a promiscuous acyltransferase that can tolerate a range of acyl groups, including acetyl-, propionyl-, and butyryl-CoA, which lead to communesins A, G and H respectively. The roles of the alpha-ketoglutarate-dependent dioxygenases cnsM and cnsP have still to be determined. In Penicillium expansum (Blue mold rot fungus), this protein is Cytochrome P450 monooxygenase cnsC.